Reading from the N-terminus, the 238-residue chain is Zinc import ATP-binding protein ZnuC (238 aa).

An ABC transporter domain is found at 5 to 220 (IQLNNISVNF…SEFIAIFGNI (216 aa)). 37-44 (GPNGAGKS) contributes to the ATP binding site.

This sequence belongs to the ABC transporter superfamily. Zinc importer (TC 3.A.1.15.5) family. As to quaternary structure, the complex is composed of two ATP-binding proteins (ZnuC), two transmembrane proteins (ZnuB) and a solute-binding protein (ZnuA).

It localises to the cell membrane. It carries out the reaction Zn(2+)(out) + ATP(in) + H2O(in) = Zn(2+)(in) + ADP(in) + phosphate(in) + H(+)(in). In terms of biological role, part of the ABC transporter complex ZnuABC involved in zinc import. Responsible for energy coupling to the transport system. The chain is Zinc import ATP-binding protein ZnuC from Buchnera aphidicola subsp. Baizongia pistaciae (strain Bp).